A 262-amino-acid polypeptide reads, in one-letter code: Small ribosomal subunit protein eS1 (262 aa).

Belongs to the eukaryotic ribosomal protein eS1 family. In terms of assembly, component of the small ribosomal subunit. Mature ribosomes consist of a small (40S) and a large (60S) subunit. The 40S subunit contains about 33 different proteins and 1 molecule of RNA (18S). The 60S subunit contains about 49 different proteins and 3 molecules of RNA (25S, 5.8S and 5S).

The protein resides in the cytoplasm. This chain is Small ribosomal subunit protein eS1, found in Theileria parva (East coast fever infection agent).